Reading from the N-terminus, the 197-residue chain is Large ribosomal subunit protein eL15 (197 aa).

Positions 163 to 172 (GKTSAGRKGR) are enriched in basic residues. Positions 163 to 197 (GKTSAGRKGRGMQTRGTGTEKTRPSVRSNLNRSKK) are disordered. The segment covering 186 to 197 (PSVRSNLNRSKK) has biased composition (polar residues).

It belongs to the eukaryotic ribosomal protein eL15 family.

The chain is Large ribosomal subunit protein eL15 from Methanococcoides burtonii (strain DSM 6242 / NBRC 107633 / OCM 468 / ACE-M).